A 553-amino-acid polypeptide reads, in one-letter code: MAFQDQDIFIVFSHASLFLNQNDLLSLSLTSKKMHDMIAIPRLYSNIHITKNPVLRTNKWFLDGGKTYVSGYRSVLKTGDKNDIFLYDRIERLLETSHLKCIKQLTIDEDLFHNREEGLQLLQRLVNEITDLDVIESLDIKDPTLFELCSAKYYRLSSLKKRVVYGETGFDGIKLWQNFKSLKWQLPESLDLQNVIIPEVGVMLMKQLNGGELEIKDEAYSSLRVFEYFDSLNLRFKNLRRLKLNHVHKQGDGSATSMRLSSRAFKDVVNLSNLKALELEFSCEVDDCECDDDFLQDITGNLVSLTSLGFIEKTFTKKGYHYMDEKWDLVVNKFILNLPNVSKDLRLLSIRHDPPLNGKGIDTVDGNLLRRKKLYEKVLPKLTSLETIIAPTVLQSITSYEMYACDLLWNGCKCAFCSKYLPLFDKYIMNHQYFSTPDARYLDIIPIVFAAYTGKSLAKRFDPQKNWDLDLLQYAPEDTTWNFHGFERIHHFASYECYFDESSFEPLATIISHFFYPYMNYLIKILPNLRQTMLSGIYFSVSPELHTYETIYD.

The 47-residue stretch at 3 to 49 (FQDQDIFIVFSHASLFLNQNDLLSLSLTSKKMHDMIAIPRLYSNIHI) folds into the F-box domain.

In terms of assembly, interacts with SKP1 and YPT32; SKP1 is required for the interaction with YPT32.

The protein localises to the cytoplasm. The protein resides in the nucleus. It is found in the cytoplasmic vesicle membrane. In terms of biological role, non-SCF-type F-box protein involved in the endocytic with the vacuolar sorting pathway. Acts as a repressor of YPT52 by inhibiting the formation of active, GTP-bound, YPT52. Involved in the defense mechanism against methylmercury toxicity. The protein is Non-SCF-type F-box protein ROY1 (ROY1) of Saccharomyces cerevisiae (strain ATCC 204508 / S288c) (Baker's yeast).